Here is a 93-residue protein sequence, read N- to C-terminus: Acylphosphatase (93 aa).

Positions 7–93 (RAHVFVSGTV…EGIDGFHIRR (87 aa)) constitute an Acylphosphatase-like domain. Catalysis depends on residues arginine 22 and asparagine 40.

The protein belongs to the acylphosphatase family.

The enzyme catalyses an acyl phosphate + H2O = a carboxylate + phosphate + H(+). This Haloquadratum walsbyi (strain DSM 16790 / HBSQ001) protein is Acylphosphatase (acyP).